A 985-amino-acid polypeptide reads, in one-letter code: MTSSAPGNADGQILAERFVSGPHVRAPDKAEHRLNEWLAELEPSLAASLRALLAKGLPRSILLGIAECSPYLFDLVRADARRFERLLRSEPQAHLAELISRTGREVFAATSEADVMRLLRQLKSEAALLIALCDIGGVWPVMQVTAALTDVAVSAVQMALRYLLRQEAVRGRLAPRDADDPEQGCGLFVLAMGKMGAGELNYSSDIDLIVFFDPEVHSLARDIEPQPFFVRVTQALARLLQSRTADGYVFRVDLRLRPDPASTQVAMSTEAALHYYEREGRTWERAAMIKARICAGDVAAGEAMLAELSPFVWRKHLDFQALTDVHDMKRQMQVYRGHSEIAVEGHNVKVGRGGIREIEFFAQTQQLIAGGRHPELRVRPTLQALGVLTASKWITEQARDELTTAYEFLRRVEHRLQMMADEQIHSLPDDAEGVSRFACFFGYESRERFASDLLFHLNIVQGHYARLFEGDPTGTVSLPPVNYGAGPDEPRLMEHLAGLGFRDPVMVAKTLQQWLAGEYRVFRTEATRTSFTEFLPALIDGLAHADEPDRAVVAFDRFLQALQLGGRLISLLGQNRDLVALVALVLGAAPRLGDMLARQPRLMDGLIDPRFFGAMPDKRELSQRLAATLQDAGTYEEFLDRLRLFGQESLFLIGTRILSGTVSAQQAGTAFADVAEGIVHTVHGLVTERFAAQHGRIKGQETAIIAMGRLGAREMTASSDLDLILLYDFDADEPDSDGERSLQGAHYFARFTQRLISAFTSRTNYGVLYDIDMRLRPSGRAGPLASHLDSFAHYQEREAWTWEHMALTRARVISASPAFRARIEEIIQTALRRPRDPVAIARDVADMRRAIAAEKGEADLWDLKHAAGGMVDIDFVAQYLQLVHAATKPEILDVSSLQVLDHAERLGVLPRADAVILRHAARLYHDLTQILRLCVSDKFKPDQAGEDLLRVLARAGDAPDFSALEARLRETQSEVRRVFTSLLEE.

An adenylyl removase region spans residues 1-472; that stretch reads MTSSAPGNAD…HYARLFEGDP (472 aa). An adenylyl transferase region spans residues 477–985; it reads SLPPVNYGAG…RRVFTSLLEE (509 aa).

Belongs to the GlnE family. Mg(2+) serves as cofactor.

The catalysed reaction is [glutamine synthetase]-O(4)-(5'-adenylyl)-L-tyrosine + phosphate = [glutamine synthetase]-L-tyrosine + ADP. It catalyses the reaction [glutamine synthetase]-L-tyrosine + ATP = [glutamine synthetase]-O(4)-(5'-adenylyl)-L-tyrosine + diphosphate. Its function is as follows. Involved in the regulation of glutamine synthetase GlnA, a key enzyme in the process to assimilate ammonia. When cellular nitrogen levels are high, the C-terminal adenylyl transferase (AT) inactivates GlnA by covalent transfer of an adenylyl group from ATP to specific tyrosine residue of GlnA, thus reducing its activity. Conversely, when nitrogen levels are low, the N-terminal adenylyl removase (AR) activates GlnA by removing the adenylyl group by phosphorolysis, increasing its activity. The regulatory region of GlnE binds the signal transduction protein PII (GlnB) which indicates the nitrogen status of the cell. This is Bifunctional glutamine synthetase adenylyltransferase/adenylyl-removing enzyme from Bradyrhizobium sp. (strain BTAi1 / ATCC BAA-1182).